We begin with the raw amino-acid sequence, 121 residues long: Large ribosomal subunit protein bL20 (121 aa).

This sequence belongs to the bacterial ribosomal protein bL20 family.

Binds directly to 23S ribosomal RNA and is necessary for the in vitro assembly process of the 50S ribosomal subunit. It is not involved in the protein synthesizing functions of that subunit. The sequence is that of Large ribosomal subunit protein bL20 from Methylorubrum populi (strain ATCC BAA-705 / NCIMB 13946 / BJ001) (Methylobacterium populi).